The chain runs to 375 residues: DNA replication and repair protein RecF (375 aa).

30–37 (GNNGSGKS) is an ATP binding site.

The protein belongs to the RecF family.

Its subcellular location is the cytoplasm. Functionally, the RecF protein is involved in DNA metabolism; it is required for DNA replication and normal SOS inducibility. RecF binds preferentially to single-stranded, linear DNA. It also seems to bind ATP. In Hahella chejuensis (strain KCTC 2396), this protein is DNA replication and repair protein RecF.